Here is a 232-residue protein sequence, read N- to C-terminus: LexA repressor (232 aa).

The segment at 1-25 is disordered; the sequence is MSDDSSDSTDAPGTSRSRDSGLTER. Residues 16–25 show a composition bias toward basic and acidic residues; the sequence is RSRDSGLTER. The H-T-H motif DNA-binding region spans 46 to 66; it reads IREIGDAVGLTSTSSVAHQLR. Active-site for autocatalytic cleavage activity residues include Ser156 and Lys193.

This sequence belongs to the peptidase S24 family. As to quaternary structure, homodimer.

It carries out the reaction Hydrolysis of Ala-|-Gly bond in repressor LexA.. Its function is as follows. Represses a number of genes involved in the response to DNA damage (SOS response), including recA and lexA. In the presence of single-stranded DNA, RecA interacts with LexA causing an autocatalytic cleavage which disrupts the DNA-binding part of LexA, leading to derepression of the SOS regulon and eventually DNA repair. This chain is LexA repressor, found in Mycolicibacterium gilvum (strain PYR-GCK) (Mycobacterium gilvum (strain PYR-GCK)).